The following is an 863-amino-acid chain: Leucine--tRNA ligase (863 aa).

A 'HIGH' region motif is present at residues 42–52; sequence PYPSGRLHMGH. The 'KMSKS' region signature appears at 622–626; it reads KMSKS. Residue Lys-625 coordinates ATP.

This sequence belongs to the class-I aminoacyl-tRNA synthetase family.

The protein localises to the cytoplasm. The catalysed reaction is tRNA(Leu) + L-leucine + ATP = L-leucyl-tRNA(Leu) + AMP + diphosphate. This chain is Leucine--tRNA ligase, found in Shewanella denitrificans (strain OS217 / ATCC BAA-1090 / DSM 15013).